A 358-amino-acid chain; its full sequence is Adenosine deaminase (358 aa).

Zn(2+) is bound by residues H14 and H16. Residues H16, D18, and G183 each coordinate substrate. H212 is a binding site for Zn(2+). E215 (proton donor) is an active-site residue. Zn(2+) is bound at residue D294. D295 lines the substrate pocket.

Belongs to the metallo-dependent hydrolases superfamily. Adenosine and AMP deaminases family. Requires Zn(2+) as cofactor.

The protein resides in the cell membrane. Its subcellular location is the cell junction. The protein localises to the cytoplasmic vesicle lumen. It is found in the cytoplasm. It localises to the lysosome. The catalysed reaction is adenosine + H2O + H(+) = inosine + NH4(+). It catalyses the reaction 2'-deoxyadenosine + H2O + H(+) = 2'-deoxyinosine + NH4(+). Catalyzes the hydrolytic deamination of adenosine and 2-deoxyadenosine. Plays an important role in purine metabolism and in adenosine homeostasis. Modulates signaling by extracellular adenosine, and so contributes indirectly to cellular signaling events. May act as a positive regulator of T-cell coactivation. This chain is Adenosine deaminase (ada), found in Xenopus laevis (African clawed frog).